Here is a 443-residue protein sequence, read N- to C-terminus: MAASPHTISSRLLTGSVGGCIWYLERRAIQGLPHRVTRLFRNVSNQWVTLQHLSFLKRMYVTQLHRGLSQRVKPKPEPPASPFLEHTSSGQARADEDELPSFPAPSRPLSRKPNEELVELEATSIVDHSLDTAKEKKEERQWKEMKLHTDDLPGILARLSKIKLTALVVSTTSAGFALAPGPFDWSCFLLTSLGTGLASCAANSINQFFEVPFDSNMNRTKNRPLVRGQISPLLAVSFATCCAVPGVALLTWGVNPLTGALGVFNIFLYTCCYTPLKRVSITNTWVGAVVGAIPPVMGWTAATGSLDAGALLLGGILYSWQFPHFNALSWGLREDYSRGGYCMMSVTHPALCRRVALRHCLALIALSTAAPVLDITTWVFPVISLPINLYISYLGFRFYVDADRRSSRKLFFCSLWHLPLLLLLMLTCKQRPGQEGDKGEAPS.

The segment at 68–113 (LSQRVKPKPEPPASPFLEHTSSGQARADEDELPSFPAPSRPLSRKP) is disordered. Transmembrane regions (helical) follow at residues 174–194 (AGFA…TSLG), 230–250 (ISPL…VALL), 252–272 (WGVN…YTCC), 286–306 (VGAV…TGSL), 308–328 (AGAL…FNAL), 363–383 (LIAL…FPVI), and 410–430 (LFFC…TCKQ).

The protein belongs to the UbiA prenyltransferase family.

The protein localises to the mitochondrion membrane. The catalysed reaction is heme b + (2E,6E)-farnesyl diphosphate + H2O = Fe(II)-heme o + diphosphate. Its function is as follows. Converts protoheme IX and farnesyl diphosphate to heme O. This is Protoheme IX farnesyltransferase, mitochondrial (Cox10) from Mus musculus (Mouse).